A 519-amino-acid chain; its full sequence is Glycogen synthase (519 aa).

The disordered stretch occupies residues 1–40 (MISAAVEPHVDAFKPDNREPLTPDFATTGKAPGAQRQHNP). Residues 8 to 21 (PHVDAFKPDNREPL) show a composition bias toward basic and acidic residues. Lys57 contributes to the ADP-alpha-D-glucose binding site.

The protein belongs to the glycosyltransferase 1 family. Bacterial/plant glycogen synthase subfamily.

It catalyses the reaction [(1-&gt;4)-alpha-D-glucosyl](n) + ADP-alpha-D-glucose = [(1-&gt;4)-alpha-D-glucosyl](n+1) + ADP + H(+). It participates in glycan biosynthesis; glycogen biosynthesis. Synthesizes alpha-1,4-glucan chains using ADP-glucose. The protein is Glycogen synthase of Pseudomonas putida (strain ATCC 47054 / DSM 6125 / CFBP 8728 / NCIMB 11950 / KT2440).